We begin with the raw amino-acid sequence, 344 residues long: Dihydroorotase (344 aa).

Residues His13 and His15 each coordinate Zn(2+). Residues 15 to 17 (HLR) and Asn41 each bind substrate. Residues Lys99, His136, and His174 each contribute to the Zn(2+) site. Lys99 bears the N6-carboxylysine mark. A substrate-binding site is contributed by His136. Residue Leu219 coordinates substrate. Asp247 is a Zn(2+) binding site. Asp247 is a catalytic residue. 2 residues coordinate substrate: His251 and Ala263.

This sequence belongs to the metallo-dependent hydrolases superfamily. DHOase family. Class II DHOase subfamily. As to quaternary structure, homodimer. Zn(2+) is required as a cofactor.

It carries out the reaction (S)-dihydroorotate + H2O = N-carbamoyl-L-aspartate + H(+). Its pathway is pyrimidine metabolism; UMP biosynthesis via de novo pathway; (S)-dihydroorotate from bicarbonate: step 3/3. Its function is as follows. Catalyzes the reversible cyclization of carbamoyl aspartate to dihydroorotate. This Acinetobacter baumannii (strain AB307-0294) protein is Dihydroorotase.